Reading from the N-terminus, the 240-residue chain is tRNA (guanine-N(1)-)-methyltransferase (240 aa).

S-adenosyl-L-methionine-binding positions include G108 and 127-132 (IGDYVL).

Belongs to the RNA methyltransferase TrmD family. In terms of assembly, homodimer.

It localises to the cytoplasm. It carries out the reaction guanosine(37) in tRNA + S-adenosyl-L-methionine = N(1)-methylguanosine(37) in tRNA + S-adenosyl-L-homocysteine + H(+). Its function is as follows. Specifically methylates guanosine-37 in various tRNAs. In Lactobacillus johnsonii (strain CNCM I-12250 / La1 / NCC 533), this protein is tRNA (guanine-N(1)-)-methyltransferase.